Reading from the N-terminus, the 259-residue chain is Global transcriptional regulator CodY (259 aa).

The segment at 1 to 155 is GAF domain; that stretch reads MELLAKTRKL…SATVVGMEIL (155 aa). Positions 203–222 form a DNA-binding region, H-T-H motif; it reads ASKIADRVGITRSVIVNALR. At Ser-215 the chain carries Phosphoserine.

It belongs to the CodY family.

It localises to the cytoplasm. Functionally, DNA-binding global transcriptional regulator which is involved in the adaptive response to starvation and acts by directly or indirectly controlling the expression of numerous genes in response to nutrient availability. During rapid exponential growth, CodY is highly active and represses genes whose products allow adaptation to nutrient depletion. The protein is Global transcriptional regulator CodY of Bacillus cytotoxicus (strain DSM 22905 / CIP 110041 / 391-98 / NVH 391-98).